Reading from the N-terminus, the 175-residue chain is Nicotinamide-nucleotide adenylyltransferase 1 (175 aa).

It belongs to the archaeal NMN adenylyltransferase family.

It is found in the cytoplasm. It carries out the reaction beta-nicotinamide D-ribonucleotide + ATP + H(+) = diphosphate + NAD(+). Its pathway is cofactor biosynthesis; NAD(+) biosynthesis; NAD(+) from nicotinamide D-ribonucleotide: step 1/1. The polypeptide is Nicotinamide-nucleotide adenylyltransferase 1 (Sulfolobus acidocaldarius (strain ATCC 33909 / DSM 639 / JCM 8929 / NBRC 15157 / NCIMB 11770)).